Consider the following 394-residue polypeptide: Myb-like protein R (394 aa).

Transmembrane regions (helical) follow at residues 11 to 31 (IGAQIITTVITLFTGVFEFII) and 99 to 119 (FFIGAVFIHLNIIPFHHLIIF). The Myb-like domain maps to 325–377 (GNWSLDEQKALMVEVSTLGNKSEINWFFISKQLFLKGISRNARECQRKHESIQ).

It localises to the membrane. The protein is Myb-like protein R (mybR) of Dictyostelium discoideum (Social amoeba).